The following is a 1372-amino-acid chain: DNA-directed RNA polymerase subunit beta (1372 aa).

Belongs to the RNA polymerase beta chain family. The RNAP catalytic core consists of 2 alpha, 1 beta, 1 beta' and 1 omega subunit. When a sigma factor is associated with the core the holoenzyme is formed, which can initiate transcription.

It catalyses the reaction RNA(n) + a ribonucleoside 5'-triphosphate = RNA(n+1) + diphosphate. Functionally, DNA-dependent RNA polymerase catalyzes the transcription of DNA into RNA using the four ribonucleoside triphosphates as substrates. This is DNA-directed RNA polymerase subunit beta from Bradyrhizobium sp. (strain ORS 278).